We begin with the raw amino-acid sequence, 66 residues long: Protein translocase subunit SecE (66 aa).

A helical transmembrane segment spans residues L34–I54.

The protein belongs to the SecE/SEC61-gamma family. Component of the Sec protein translocase complex. Heterotrimer consisting of SecY, SecE and SecG subunits. The heterotrimers can form oligomers, although 1 heterotrimer is thought to be able to translocate proteins. Interacts with the ribosome. Interacts with SecDF, and other proteins may be involved. Interacts with SecA.

It is found in the cell inner membrane. Functionally, essential subunit of the Sec protein translocation channel SecYEG. Clamps together the 2 halves of SecY. May contact the channel plug during translocation. In Rickettsia bellii (strain RML369-C), this protein is Protein translocase subunit SecE.